Consider the following 305-residue polypeptide: Mas-related G-protein coupled receptor member A2B (305 aa).

Residues 1–17 (MDETLPGSINIRILIPK) are Extracellular-facing. A helical membrane pass occupies residues 18–38 (LMIIIFGLVGLMGNAIVFWLL). The Cytoplasmic portion of the chain corresponds to 39–53 (GFHLRRNAFSVYILN). The chain crosses the membrane as a helical span at residues 54–74 (LALADFLFLLSSIIASTLFLL). At 75-78 (KVSY) the chain is on the extracellular side. Residues 79 to 99 (LSIIFHLCFNTIMMVVYITGI) form a helical membrane-spanning segment. The Cytoplasmic portion of the chain corresponds to 100 to 132 (SMLSAISTECCLSVLCPTWYRCHRPVHTSTVMC). A helical transmembrane segment spans residues 133–153 (AVIWVLSLLICILNSYFCAVL). The Extracellular portion of the chain corresponds to 154–167 (HTRYDNDNECLATN). A helical transmembrane segment spans residues 168-188 (IFTASYMIFLLVVLCLSSLAL). Topologically, residues 189–207 (LARLFCGAGQMKLTRFHVT) are cytoplasmic. The helical transmembrane segment at 208 to 228 (ILLTLLVFLLCGLPFVIYCIL) threads the bilayer. Residues 229–244 (LFKIKDDFHVLDVNFY) are Extracellular-facing. Residues 245–265 (LALEVLTAINSCANPIIYFFV) traverse the membrane as a helical segment. The Cytoplasmic segment spans residues 266–305 (GSFRHQLKHQTLKMVLQSALQDTPETAENMVEMSSNKAEP).

This sequence belongs to the G-protein coupled receptor 1 family. Mas subfamily. Expressed in a subset of sensory neurons that includes nociceptors. Expressed in the subclass of non-peptidergic sensory neurons that are IB4(+) and VR1(-).

The protein localises to the cell membrane. Functionally, orphan receptor. May be a receptor for RFamide-family neuropeptides such as NPFF and NPAF, which are analgesic in vivo. May regulate nociceptor function and/or development, including the sensation or modulation of pain. The sequence is that of Mas-related G-protein coupled receptor member A2B from Mus musculus (Mouse).